A 1513-amino-acid chain; its full sequence is Mucin-2 (1513 aa).

The N-terminal stretch at 1 to 20 is a signal peptide; the sequence is MGLPLARLVAVCLVLALAKG. A VWFD 1 domain is found at 32-204; that stretch reads HVCSTWGDFH…KINKPEVVCE (173 aa). Cystine bridges form between Cys-34-Cys-166, Cys-56-Cys-203, Cys-64-Cys-163, Cys-215-Cys-252, Cys-222-Cys-247, Cys-234-Cys-272, Cys-254-Cys-260, Cys-262-Cys-288, Cys-292-Cys-326, Cys-309-Cys-348, Cys-328-Cys-342, Cys-350-Cys-372, Cys-367-Cys-384, Cys-370-Cys-379, Cys-388-Cys-525, Cys-410-Cys-560, Cys-432-Cys-440, Cys-571-Cys-616, Cys-585-Cys-611, Cys-598-Cys-636, Cys-618-Cys-624, Cys-626-Cys-651, Cys-658-Cys-695, Cys-671-Cys-685, Cys-675-Cys-715, Cys-697-Cys-709, Cys-717-Cys-739, and Cys-737-Cys-746. Asp-46 provides a ligand contact to Ca(2+). 2 residues coordinate Cu(+): Met-143 and Met-151. Residue Glu-153 participates in Cu(2+) binding. Asn-160 carries an N-linked (GlcNAc...) asparagine glycan. 3 residues coordinate Ca(2+): Asp-168, Asn-170, and Glu-177. The Cu(2+) site is built by His-274 and His-321. The TIL domain maps to 292-348; it reads CPGNMVYLESGSPWLDTCSHLEVSSLCEEHYMDGCFCPEGTVYDDITGSGCIPVSQC. Met-323 contributes to the Cu(+) binding site. The VWFC domain maps to 350-410; that stretch reads CKLHGHLYMP…GKKFTFHGDC (61 aa). The VWFD 2 domain occupies 386–561; sequence ETCALEGGSH…NTWKAQSSCH (176 aa). Asp-400 serves as a coordination point for Ca(2+). Asn-420 is a glycosylation site (N-linked (GlcNAc...) asparagine). The Ca(2+) site is built by Asn-527, Asn-529, Leu-531, Asp-534, and Asp-535. N-linked (GlcNAc...) asparagine glycosylation occurs at Asn-667. The N-linked (GlcNAc...) asparagine glycan is linked to Asn-767. 21 cysteine pairs are disulfide-bonded: Cys-781–Cys-817, Cys-799–Cys-811, Cys-819–Cys-842, Cys-836–Cys-854, Cys-840–Cys-849, Cys-858–Cys-989, Cys-880–Cys-1024, Cys-889–Cys-986, Cys-906–Cys-913, Cys-1034–Cys-1077, Cys-1048–Cys-1072, Cys-1059–Cys-1099, Cys-1079–Cys-1087, Cys-1089–Cys-1114, Cys-1105–Cys-1134, Cys-1118–Cys-1160, Cys-1142–Cys-1184, Cys-1164–Cys-1178, Cys-1186–Cys-1210, Cys-1205–Cys-1235, and Cys-1208–Cys-1218. The N-linked (GlcNAc...) asparagine glycan is linked to Asn-837. A VWFD 3 domain is found at 856-1025; it reads STCSIYGSGH…NSWKEASTCP (170 aa). Position 870 (Asp-870) interacts with Ca(2+). Residue Asn-892 is glycosylated (N-linked (GlcNAc...) asparagine). 4 residues coordinate Ca(2+): Asn-991, Asp-993, Asn-998, and Asp-999. 2 N-linked (GlcNAc...) asparagine glycosylation sites follow: Asn-1136 and Asn-1151. Asn-1212, Asn-1227, and Asn-1243 each carry an N-linked (GlcNAc...) asparagine glycan. Residues Thr-1264, Thr-1267, Thr-1268, and Thr-1280 are each glycosylated (O-linked (GalNAc) threonine). Ser-1286 carries an O-linked (GalNAc) serine glycan. O-linked (GalNAc) threonine glycosylation occurs at Thr-1290. Residues Asn-1303, His-1306, Ser-1309, Gly-1313, Asp-1314, and Glu-1316 each coordinate Ca(2+). An N-linked (GlcNAc...) asparagine glycan is attached at Asn-1350. Ca(2+) contacts are provided by Asp-1373 and Tyr-1374. Repeat copies occupy residues 1392-1407, 1408-1423, 1424-1434, 1435-1445, 1446-1456, 1457-1467, 1468-1478, 1479-1489, 1490-1500, 1501-1511, and 1512-1513. Residues 1392–1513 form an approximate repeats region; it reads SPTTSTPISS…TSPTTSTTSP (122 aa). The tract at residues 1392–1513 is disordered; that stretch reads SPTTSTPISS…TSPTTSTTSP (122 aa).

In terms of assembly, homomultimer; disulfide-linked. The N- and C-terminus mediate their assembly into higher order structures to form filaments. The CTCK domains of two polypeptides associate in the endoplasmic reticulum to generate intermolecularly disulfide-bonded dimers. These dimers progress to the Golgi apparatus, which is a more acidic environment than the endoplasmic reticulum. Under acidic conditions, the N-termini form non-covalent intermolecular interactions that juxtapose assemblies of the third VWD domain (VWD3) from different CTCK-linked dimers. The VWD3 assemblies then become disulfide bonded to one another to produce long, disulfide-linked polymers that remain highly compact until secretion. Interacts with FCGBP. Interacts with AGR2; disulfide-linked. Post-translationally, O-glycosylated. O-glycosylation is required for mucin assembly. Goblet cells synthesize two forms of mucin that differ in branched chain O-glycosylation and the site of production in the colon. In terms of processing, may undergo proteolytic cleavage in the outer mucus layer of the colon, contributing to the expanded volume and loose nature of this layer which allows for bacterial colonization in contrast to the inner mucus layer which is dense and devoid of bacteria. At low pH of 6 and under, undergoes autocatalytic cleavage in vitro in the N-terminal region of the fourth VWD domain. It is likely that this also occurs in vivo and is triggered by the low pH of the late secretory pathway. As to expression, expressed in intestine and airway.

The protein localises to the secreted. In terms of biological role, coats the epithelia of the intestines and other mucus membrane-containing organs to provide a protective, lubricating barrier against particles and infectious agents at mucosal surfaces. Major constituent of the colon mucus, which is mainly formed by large polymeric networks of MUC2 secreted by goblet cells that cover the exposed surfaces of intestine. MUC2 networks form hydrogels that guard the underlying epithelium from pathogens and other hazardous matter entering from the outside world, while permitting nutrient absorption and gas exchange. Acts as a divalent copper chaperone that protects intestinal cells from copper toxicity and facilitates nutritional copper unptake into cells. Binds both Cu(2+) and its reduced form, Cu(1+), at two juxtaposed binding sites: Cu(2+), once reduced to Cu(1+) by vitamin C (ascorbate) or other dietary antioxidants, transits to the other binding site. MUC2-bound Cu(1+) is protected from oxidation in aerobic environments, and can be released for nutritional delivery to cells. Mucin gels store antimicrobial molecules that participate in innate immunity. Mucin glycoproteins also house and feed the microbiome, lubricate tissue surfaces, and may facilitate the removal of contaminants and waste products from the body. Goblet cells synthesize two forms of MUC2 mucin that differ in branched chain O-glycosylation and the site of production in the colon: a (1) 'thick' mucus that wraps the microbiota to form fecal pellets is produced in the proximal, ascending colon. 'Thick' mucus transits along the descending colon and is lubricated by a (2) 'thin' MUC2 mucus produced in the distal colon which adheres to the 'thick' mucus. The sequence is that of Mucin-2 from Rattus norvegicus (Rat).